We begin with the raw amino-acid sequence, 735 residues long: Ion-translocating oxidoreductase complex subunit C (735 aa).

4Fe-4S ferredoxin-type domains are found at residues 368–397 and 407–436; these read MGAPQEEKSCIRCSACADACPADLLPQQLY and KATAHHIADCIECGACAWVCPSNIPLVQYF. Positions 377, 380, 383, 387, 416, 419, 422, and 426 each coordinate [4Fe-4S] cluster. A disordered region spans residues 538–715; the sequence is KQAAHPMADS…PADPRKAAVA (178 aa). The segment covering 556-565 has biased composition (low complexity); sequence KAAVEAAIAR.

Belongs to the 4Fe4S bacterial-type ferredoxin family. RnfC subfamily. The complex is composed of six subunits: RsxA, RsxB, RsxC, RsxD, RsxE and RsxG. [4Fe-4S] cluster is required as a cofactor.

The protein localises to the cell inner membrane. Part of a membrane-bound complex that couples electron transfer with translocation of ions across the membrane. Required to maintain the reduced state of SoxR. The protein is Ion-translocating oxidoreductase complex subunit C of Salmonella typhimurium (strain LT2 / SGSC1412 / ATCC 700720).